The sequence spans 359 residues: Trans-enoyl reductase FSL5 (359 aa).

Residue 47 to 50 participates in NADP(+) binding; sequence IDGK. Substrate is bound at residue 134 to 141; it reads SGVGTIGL. NADP(+) contacts are provided by residues 169 to 172, 192 to 195, Y210, and 257 to 258; these read STAT, SPHN, and LE. 277–281 is a substrate binding site; it reads GPTLL. 346-347 is a binding site for NADP(+); the sequence is VS.

Belongs to the zinc-containing alcohol dehydrogenase family. In terms of assembly, monomer.

It functions in the pathway secondary metabolite biosynthesis. In terms of biological role, trans-enoyl reductase; part of the gene cluster that mediates the biosynthesis of fusarielins F, G and H, decaketide compounds with 5 methylations and a decaline core that act as mycoestrogens as they stimulate growth of MCF-7 breast cancer cells. The initial compound in the pathway is produced by the reducing polyketide synthase FSL1. FSL1 lacks an active enoyl reductase (ER) domain and biosynthesis of fusarielins relies on the trans-acting enoyl reductase FSL5, before it is released through hydrolysis catalyzed by the thioesterase FSL2. Fusarielins F, G, and H have a C11=C12 cis double bond and is fully reduced between C10 and C11 and between C12 and C13. FSL3 can be involved in the formation of the C11=C12 cis double bond by moving a hypothetical C10=C11 or C12=C13 trans double bond to form prefusarielin. Prefusarielin is oxygenated at C15 and C16 by the cytochrome P450 monooxygenase FSL4, resulting in fusarielin F, which subsequently is epoxidized into fusarielin G by the same enzyme. The final step in the pathway is a reduction of the carboxylic acid moiety to yield fusarielin H via a still undetermined mechanism. This is Trans-enoyl reductase FSL5 from Gibberella zeae (strain ATCC MYA-4620 / CBS 123657 / FGSC 9075 / NRRL 31084 / PH-1) (Wheat head blight fungus).